We begin with the raw amino-acid sequence, 783 residues long: Coiled-coil domain-containing protein 30 (783 aa).

The span at 1 to 22 shows a compositional bias: basic and acidic residues; the sequence is MSQEKNEMFESEWSKEREREKQ. Disordered regions lie at residues 1–26, 101–191, and 209–231; these read MSQE…LASG, LGGK…LTMK, and LLQS…SSGE. The stretch at 22–98 forms a coiled coil; that stretch reads QLASGLDTAE…LSQEFAQLNH (77 aa). Polar residues predominate over residues 106 to 115; it reads APSNLITSEN. The span at 131 to 191 shows a compositional bias: basic and acidic residues; the sequence is IQSRKEETEE…EEKEQQLTMK (61 aa). Coiled coils occupy residues 165–497 and 527–622; these read REGQ…LNVH and DKRI…RIIR. Residues 731–755 form a disordered region; the sequence is EEIKSKEAMASSKSPEKSPENLVCS.

It belongs to the prefoldin subunit beta family. As to expression, expressed in brain, kidney, pancreas, placenta, liver, thymus and prostate.

This Homo sapiens (Human) protein is Coiled-coil domain-containing protein 30 (CCDC30).